A 208-amino-acid polypeptide reads, in one-letter code: Small ribosomal subunit protein uS4 (208 aa).

An S4 RNA-binding domain is found at 96–159 (SRLDNIVYRL…KKNEKVLEAL (64 aa)).

This sequence belongs to the universal ribosomal protein uS4 family. Part of the 30S ribosomal subunit. Contacts protein S5. The interaction surface between S4 and S5 is involved in control of translational fidelity.

Its function is as follows. One of the primary rRNA binding proteins, it binds directly to 16S rRNA where it nucleates assembly of the body of the 30S subunit. With S5 and S12 plays an important role in translational accuracy. The protein is Small ribosomal subunit protein uS4 of Mycoplasma capricolum subsp. capricolum (strain California kid / ATCC 27343 / NCTC 10154).